A 141-amino-acid chain; its full sequence is MIKLRLKRYGKKRESSYRIVAMNSDSRRDGRPLEELGFYNPRTDETRLDVPGITRRLEQGAQPTDTVRDILKKANVLELSRTGVNTQANVSVSHAESTEAITNAEPIQATANTESNEVSDSESTATATIRESEEQPPISES.

Polar residues-rich tracts occupy residues 89–101 (NVSV…TEAI) and 109–129 (ATAN…TATI). A disordered region spans residues 89 to 141 (NVSVSHAESTEAITNAEPIQATANTESNEVSDSESTATATIRESEEQPPISES).

The protein belongs to the bacterial ribosomal protein bS16 family.

This is Small ribosomal subunit protein bS16 from Trichodesmium erythraeum (strain IMS101).